A 198-amino-acid chain; its full sequence is Ribonuclease HII (198 aa).

The 188-residue stretch at 11–198 folds into the RNase H type-2 domain; the sequence is NLIAGVDEVG…GPVKRVLGLV (188 aa). A divalent metal cation is bound by residues Asp-17, Glu-18, and Asp-109.

It belongs to the RNase HII family. Requires Mn(2+) as cofactor. It depends on Mg(2+) as a cofactor.

It localises to the cytoplasm. It catalyses the reaction Endonucleolytic cleavage to 5'-phosphomonoester.. Endonuclease that specifically degrades the RNA of RNA-DNA hybrids. This is Ribonuclease HII from Yersinia pseudotuberculosis serotype O:3 (strain YPIII).